The following is a 42-amino-acid chain: Iota-conotoxin-like R11.1 (42 aa).

Cystine bridges form between C5–C19, C12–C22, C18–C27, and C21–C36.

Belongs to the conotoxin I1 superfamily. As to expression, expressed by the venom duct.

It is found in the secreted. Iota-conotoxins bind to voltage-gated sodium channels (Nav) and act as agonists by shifting the voltage-dependence of activation to more hyperpolarized levels. Produces general excitatory symptoms. The chain is Iota-conotoxin-like R11.1 from Conus radiatus (Rayed cone).